We begin with the raw amino-acid sequence, 401 residues long: Type 3 secretion system translocon protein SctE (401 aa).

Positions Ile-129–Ser-160 form a coiled coil. 2 helical membrane-spanning segments follow: residues Val-176–Val-196 and Ile-224–Thr-244. A coiled-coil region spans residues Leu-345–Leu-379.

The protein belongs to the SctE/SipB/YopB family. As to quaternary structure, the core secretion machinery of the T3SS is composed of approximately 20 different proteins, including cytoplasmic components, a base, an export apparatus and a needle. This subunit is involved in the formation of a pore, called the translocon, in host membrane. Interacts with YopD/SctB. Together with YopD/SctB, forms a multimeric integral membrane complex.

It localises to the secreted. The protein resides in the host membrane. Its function is as follows. Component of the type III secretion system (T3SS), also called injectisome, which is used to inject bacterial effector proteins into eukaryotic host cells. YopB/SctE and YopD/SctB are inserted into the host membrane where they form a pore and allow the translocation of effector proteins into the cytosol of target cells. Is an essential virulence determinant. Required for YopE and YopH translocation. Shows membrane disruptive activity in vitro. Functionally, interaction with the host cell triggers a signaling response, via activation of the small GTPase Ras, the MAPK kinases ERK and JNK and the nuclear factor NF-kappa-B pathways, and production of the proinflammatory cytokine interleukin-8 (IL-8). YopB/SctE-dependent signaling response is counteracted by YopE, YopH and YopJ in infected host cells. YopB/SctE is directly responsible for signaling and its insertion in the membrane is important to activate the signaling response in the host cell. The chain is Type 3 secretion system translocon protein SctE from Yersinia pseudotuberculosis serotype I (strain IP32953).